The following is a 222-amino-acid chain: Flagellar L-ring protein (222 aa).

The signal sequence occupies residues 1 to 18; it reads MRRPGAAALAAAALALAG. Residue cysteine 19 is the site of N-palmitoyl cysteine attachment. Residue cysteine 19 is the site of S-diacylglycerol cysteine attachment.

Belongs to the FlgH family. As to quaternary structure, the basal body constitutes a major portion of the flagellar organelle and consists of four rings (L,P,S, and M) mounted on a central rod.

Its subcellular location is the cell outer membrane. The protein localises to the bacterial flagellum basal body. Assembles around the rod to form the L-ring and probably protects the motor/basal body from shearing forces during rotation. The sequence is that of Flagellar L-ring protein from Burkholderia mallei (strain ATCC 23344).